Reading from the N-terminus, the 490-residue chain is Beta-glucosidase 42 (490 aa).

A beta-D-glucoside is bound by residues Q35, H137, 182–183, Y317, and E388; that span reads NE. The active-site Proton donor is the E183. Catalysis depends on E388, which acts as the Nucleophile. N-linked (GlcNAc...) asparagine glycosylation occurs at N420. Residues W437, 444 to 445, and F453 contribute to the a beta-D-glucoside site; that span reads EW.

Belongs to the glycosyl hydrolase 1 family. As to expression, expressed at low levels predominantly in root epidermal cells.

The enzyme catalyses Hydrolysis of terminal, non-reducing beta-D-glucosyl residues with release of beta-D-glucose.. Functionally, glucosidase that hydrolyzes scopolin and various beta-glucosides, cellooligosaccharides (mainly cellotriose) and laminarioligosaccharides. Can use p-nitrophenyl-beta-glucosides (pNP beta-Glc) and p-nitrophenyl-beta-D-fucosides (pNP beta-D-Fuc) as substrates, and, to a lower extent, beta-galactosides, beta-mannosides and beta-xylosides. Involved in the secretion of root-derived phenolics upon iron ions (Fe) depletion. Promotes disease resistance toward B.cinerea, H.arabidopsidis and P.syringae pv. tomato DC3000. Required during rhizobacteria-mediated (e.g. P.fluorescens WCS417r) broad-spectrum induced systemic resistance (ISR) against several pathogens. The sequence is that of Beta-glucosidase 42 from Arabidopsis thaliana (Mouse-ear cress).